The primary structure comprises 128 residues: UPF0102 protein Rfer_3873 (128 aa).

The span at Met-1–Gln-15 shows a compositional bias: polar residues. Residues Met-1–Ala-20 are disordered.

Belongs to the UPF0102 family.

The polypeptide is UPF0102 protein Rfer_3873 (Albidiferax ferrireducens (strain ATCC BAA-621 / DSM 15236 / T118) (Rhodoferax ferrireducens)).